A 305-amino-acid polypeptide reads, in one-letter code: MQVHDNHRRPLVSLRISVTGRCNVSCIYCHRDGILRSDEEMSPEDIENICRVASDLGVKKIRLSGGEPLIRDDIVEIVEKINSIGFRDISITTNGTLLEDLSVPLRDAGLDRVNVSFDTLKPETYRFITRKDYLERVKAGIEGAVMAGLDPVKINMVILRGVNHHEIWDMFEFCRQQGAVLQIIELLKTDSCPDNGVERYHCDITPIEAELAEMADRIMTRKFMQDRKKYFIGDGEVEVVRPMDNTRFCANCTRLRVTPDGKLKPCLLRNDNLVDTKEALSSGDLEGLRELFLEAIRRRSPYYQS.

The 223-residue stretch at 6–228 folds into the Radical SAM core domain; it reads NHRRPLVSLR…MTRKFMQDRK (223 aa). GTP is bound at residue Arg-15. Positions 22 and 26 each coordinate [4Fe-4S] cluster. Residue Tyr-28 coordinates S-adenosyl-L-methionine. Cys-29 lines the [4Fe-4S] cluster pocket. GTP is bound at residue Arg-62. Gly-66 serves as a coordination point for S-adenosyl-L-methionine. Thr-92 contacts GTP. Position 116 (Ser-116) interacts with S-adenosyl-L-methionine. Position 153 (Lys-153) interacts with GTP. [4Fe-4S] cluster-binding residues include Cys-249 and Cys-252. 254 to 256 is a GTP binding site; that stretch reads RLR. Position 266 (Cys-266) interacts with [4Fe-4S] cluster.

Belongs to the radical SAM superfamily. MoaA family. [4Fe-4S] cluster serves as cofactor.

It catalyses the reaction GTP + AH2 + S-adenosyl-L-methionine = (8S)-3',8-cyclo-7,8-dihydroguanosine 5'-triphosphate + 5'-deoxyadenosine + L-methionine + A + H(+). Its pathway is cofactor biosynthesis; molybdopterin biosynthesis. Functionally, catalyzes the cyclization of GTP to (8S)-3',8-cyclo-7,8-dihydroguanosine 5'-triphosphate. This chain is Probable GTP 3',8-cyclase, found in Methanothermobacter marburgensis (strain ATCC BAA-927 / DSM 2133 / JCM 14651 / NBRC 100331 / OCM 82 / Marburg) (Methanobacterium thermoautotrophicum).